The following is a 238-amino-acid chain: Pyridoxine 5'-phosphate synthase (238 aa).

Asparagine 9 is a binding site for 3-amino-2-oxopropyl phosphate. 11-12 (DH) lines the 1-deoxy-D-xylulose 5-phosphate pocket. Arginine 20 lines the 3-amino-2-oxopropyl phosphate pocket. The active-site Proton acceptor is the histidine 45. Arginine 47 and histidine 52 together coordinate 1-deoxy-D-xylulose 5-phosphate. Glutamate 72 functions as the Proton acceptor in the catalytic mechanism. Threonine 102 contacts 1-deoxy-D-xylulose 5-phosphate. The active-site Proton donor is the histidine 189. Residues glycine 190 and 211 to 212 (GH) contribute to the 3-amino-2-oxopropyl phosphate site.

The protein belongs to the PNP synthase family. As to quaternary structure, homooctamer; tetramer of dimers.

It is found in the cytoplasm. The enzyme catalyses 3-amino-2-oxopropyl phosphate + 1-deoxy-D-xylulose 5-phosphate = pyridoxine 5'-phosphate + phosphate + 2 H2O + H(+). Its pathway is cofactor biosynthesis; pyridoxine 5'-phosphate biosynthesis; pyridoxine 5'-phosphate from D-erythrose 4-phosphate: step 5/5. Functionally, catalyzes the complicated ring closure reaction between the two acyclic compounds 1-deoxy-D-xylulose-5-phosphate (DXP) and 3-amino-2-oxopropyl phosphate (1-amino-acetone-3-phosphate or AAP) to form pyridoxine 5'-phosphate (PNP) and inorganic phosphate. The chain is Pyridoxine 5'-phosphate synthase from Ehrlichia ruminantium (strain Welgevonden).